The sequence spans 79 residues: Defensin-like protein 54 (79 aa).

A signal peptide spans 1–27 (MGIKKTSATVFLVIILTISFSYYDVEA). 4 cysteine pairs are disulfide-bonded: Cys39-Cys76, Cys43-Cys67, Cys52-Cys74, and Cys56-Cys75.

The protein belongs to the DEFL family.

It is found in the secreted. The sequence is that of Defensin-like protein 54 from Arabidopsis thaliana (Mouse-ear cress).